The chain runs to 224 residues: Large ribosomal subunit protein uL11c (224 aa).

Residues 1–66 constitute a chloroplast transit peptide; that stretch reads MAQPLVAAPS…SHRRLSIVAM (66 aa). 2 positions are modified to N6,N6,N6-trimethyllysine: lysine 75 and lysine 111.

In terms of assembly, component of the chloroplast large ribosomal subunit (LSU). Mature 70S chloroplast ribosomes of higher plants consist of a small (30S) and a large (50S) subunit. The 30S small subunit contains 1 molecule of ribosomal RNA (16S rRNA) and 24 different proteins. The 50S large subunit contains 3 rRNA molecules (23S, 5S and 4.5S rRNA) and 33 different proteins.

It is found in the plastid. The protein resides in the chloroplast. In terms of biological role, component of the chloroplast ribosome (chloro-ribosome), a dedicated translation machinery responsible for the synthesis of chloroplast genome-encoded proteins, including proteins of the transcription and translation machinery and components of the photosynthetic apparatus. This chain is Large ribosomal subunit protein uL11c (rpl11), found in Spinacia oleracea (Spinach).